Consider the following 290-residue polypeptide: tRNA dimethylallyltransferase (290 aa).

Gly9 to Thr16 lines the ATP pocket. Thr11 to Thr16 provides a ligand contact to substrate. The segment at Asp34–Gln37 is interaction with substrate tRNA.

It belongs to the IPP transferase family. As to quaternary structure, monomer. Mg(2+) is required as a cofactor.

It catalyses the reaction adenosine(37) in tRNA + dimethylallyl diphosphate = N(6)-dimethylallyladenosine(37) in tRNA + diphosphate. Catalyzes the transfer of a dimethylallyl group onto the adenine at position 37 in tRNAs that read codons beginning with uridine, leading to the formation of N6-(dimethylallyl)adenosine (i(6)A). In Phytoplasma australiense, this protein is tRNA dimethylallyltransferase.